The chain runs to 276 residues: Energy-coupling factor transporter ATP-binding protein EcfA2 (276 aa).

The ABC transporter domain maps to 1–233; sequence MKTPFERLAL…GEEMAGWGLD (233 aa). 27 to 34 is an ATP binding site; it reads GHTGSGKS. Glu158 (proton acceptor) is an active-site residue.

Belongs to the ABC transporter superfamily. Energy-coupling factor EcfA family. Forms a stable energy-coupling factor (ECF) transporter complex composed of 2 membrane-embedded substrate-binding proteins (S component), 2 ATP-binding proteins (A component) and 2 transmembrane proteins (T component).

Its subcellular location is the cell membrane. ATP-binding (A) component of a common energy-coupling factor (ECF) ABC-transporter complex. Unlike classic ABC transporters this ECF transporter provides the energy necessary to transport a number of different substrates. This chain is Energy-coupling factor transporter ATP-binding protein EcfA2, found in Bacillus subtilis (strain 168).